A 180-amino-acid chain; its full sequence is Stathmin-3 (180 aa).

2 S-palmitoyl cysteine lipidation sites follow: Cys-22 and Cys-24. The region spanning 38 to 180 is the SLD domain; that stretch reads GDMEVKQLDK…NKEQREEMSG (143 aa). Ser-50, Ser-60, Ser-65, Ser-68, Ser-72, Ser-73, and Ser-81 each carry phosphoserine. Residues 60-74 show a composition bias toward low complexity; it reads SPSDLSPESPVLSSP. A disordered region spans residues 60–81; sequence SPSDLSPESPVLSSPPKRKDAS. Residues 75-179 adopt a coiled-coil conformation; sequence PKRKDASLEE…RNKEQREEMS (105 aa).

Belongs to the stathmin family. Interacts with STAT3. Interacts with CLU (secreted form); this interaction may act as an important modulator during neuronal differentiation. In terms of processing, N-terminal palmitoylation promotes specific anchoring to the cytosolic leaflet of Golgi membranes and subsequent vesicular trafficking along dendrites and axons. Neuronal Stathmins are substrates for palmitoyltransferases ZDHHC3, ZDHHC7 and ZDHHC15. Neuron specific.

The protein localises to the golgi apparatus. The protein resides in the cell projection. It localises to the growth cone. It is found in the axon. Its subcellular location is the cytoplasm. The protein localises to the cytosol. Functionally, exhibits microtubule-destabilizing activity, which is antagonized by STAT3. This is Stathmin-3 (Stmn3) from Mus musculus (Mouse).